We begin with the raw amino-acid sequence, 235 residues long: Peptidase E (235 aa).

Residues Ser122, Asp137, and His159 each act as charge relay system in the active site.

It belongs to the peptidase S51 family.

It is found in the cytoplasm. The catalysed reaction is Dipeptidase E catalyzes the hydrolysis of dipeptides Asp-|-Xaa. It does not act on peptides with N-terminal Glu, Asn or Gln, nor does it cleave isoaspartyl peptides.. In terms of biological role, hydrolyzes dipeptides containing N-terminal aspartate residues. May play a role in allowing the cell to use peptide aspartate to spare carbon otherwise required for the synthesis of the aspartate family of amino acids. The chain is Peptidase E from Shewanella denitrificans (strain OS217 / ATCC BAA-1090 / DSM 15013).